The following is a 333-amino-acid chain: Dipeptide transport system permease protein DppB (333 aa).

6 helical membrane passes run 10 to 30, 99 to 119, 130 to 150, 197 to 217, 256 to 276, and 300 to 320; these read LLLIPVLIGMTIVTFSIIHLI, IELTIFAMIFAIIIGVNAGIV, YLSMFIALVGVSMPIFWLALM, SIKHLILPGIALGTIPMAIIA, LIPVLTVVGLQTGNLLGGAIL, and PVIQSGILVVATIFVLINLFV. The ABC transmembrane type-1 domain occupies 95–324; the sequence is LAATIELTIF…LINLFVDLLY (230 aa).

The protein belongs to the binding-protein-dependent transport system permease family. OppBC subfamily.

It localises to the cell membrane. Its function is as follows. Probably part of the ABC transporter Dpp involved in dipeptide transport. Responsible for the translocation of the substrate across the membrane. This is Dipeptide transport system permease protein DppB (dppB) from Alkalihalophilus pseudofirmus (strain ATCC BAA-2126 / JCM 17055 / OF4) (Bacillus pseudofirmus).